We begin with the raw amino-acid sequence, 151 residues long: MEKPSPTRRQTSSLSTISNGMTMTNDNRDTTNTNSGSTSSNNSQPSSSSTPPAASGPVTDRTKVNYVPKSDDPSSFQYYPDDPENPVNKYKFALKADSQYYDPCEESSKLSFQCLERNDYDRSKCQEYFDAYRECKKQWLTARRKNRQQWE.

Residues 1–10 (MEKPSPTRRQ) constitute a mitochondrion transit peptide. The disordered stretch occupies residues 1 to 86 (MEKPSPTRRQ…QYYPDDPENP (86 aa)). Over residues 7-18 (TRRQTSSLSTIS) the composition is skewed to polar residues. The segment covering 19–51 (NGMTMTNDNRDTTNTNSGSTSSNNSQPSSSSTP) has biased composition (low complexity). A CHCH domain is found at 101-143 (YDPCEESSKLSFQCLERNDYDRSKCQEYFDAYRECKKQWLTAR). 2 consecutive short sequence motifs (cx9C motif) follow at residues 104 to 114 (CEESSKLSFQC) and 125 to 135 (CQEYFDAYREC). Intrachain disulfides connect Cys-104-Cys-135 and Cys-114-Cys-125.

It belongs to the COX23 family.

The protein localises to the cytoplasm. It localises to the mitochondrion intermembrane space. Its function is as follows. Required for the assembly of cytochrome c oxidase. This Saccharomyces cerevisiae (strain ATCC 204508 / S288c) (Baker's yeast) protein is Cytochrome c oxidase-assembly factor COX23, mitochondrial (COX23).